A 171-amino-acid polypeptide reads, in one-letter code: UPF0316 protein EAT1b_0871 (171 aa).

3 consecutive transmembrane segments (helical) span residues 4–24 (ILLI…RTIM), 32–52 (IAGL…GIVF), and 57–77 (TVGM…GGFV).

It belongs to the UPF0316 family.

The protein resides in the cell membrane. In Exiguobacterium sp. (strain ATCC BAA-1283 / AT1b), this protein is UPF0316 protein EAT1b_0871.